Consider the following 444-residue polypeptide: Pestheic acid cluster transcriptional regulator 2 (444 aa).

Residues 1-22 (MEAADPNNNLTITSPSTLLSNP) show a composition bias toward polar residues. Positions 1–31 (MEAADPNNNLTITSPSTLLSNPTQPPAQPLK) are disordered. A DNA-binding region (zn(2)-C6 fungal-type) is located at residues 36–63 (CHACASSKVKCHKEKPTCSRCRKRGITC). Positions 326–348 (ARVGSGVSTHTTAGQYEPQVEQQ) are disordered. A compositionally biased stretch (polar residues) spans 331–348 (GVSTHTTAGQYEPQVEQQ).

The protein localises to the nucleus. Functionally, transcription factor that, with ptaR1 and ptaR3, coregulates the expression of the gene cluster that mediates the biosynthesis of pestheic acid, a diphenyl ether which is a biosynthetic precursor of the unique chloropupukeananes. This is Pestheic acid cluster transcriptional regulator 2 from Pestalotiopsis fici (strain W106-1 / CGMCC3.15140).